The sequence spans 237 residues: BTB/POZ domain-containing protein KCTD6 (237 aa).

The tract at residues 1–104 is interaction with ANK1 isoform Mu7; sequence MDNGDWGYMM…FYQIEPLIQC (104 aa). The segment at 10–110 is interaction with CUL3; the sequence is MSDPVTLNVG…LIQCLNDPRP (101 aa). In terms of domain architecture, BTB spans 12 to 81; that stretch reads DPVTLNVGGH…LRTSELTLPL (70 aa). The segment at 113-187 is interaction with USP21; it reads PMDTFEEVVE…TFGPCDYHQE (75 aa).

Homopentamer. Interacts with KCTD11; KCTD6 and KCTD11 may associate in heteropentameric assemblies. Interacts (via BTB domain) with CUL3; initially a 4:4 stoichiometry has been reported, however, electron microscopy revealed pentameric states with a five-pointed pinwheel shape. The interaction with CUL3 is indicative for a participation in a BCR (BTB-CUL3-RBX1) E3 ubiquitin-protein ligase complex. Interacts with HDAC1; probably indirect as the interaction requires the presence of KCTD11. Interacts with USP21 (preferentially catalytic inactive form). Interacts with ANK1 isoform Mu7; detected in striated muscle. Interacts with USP11. As to expression, highly expressed in cerebellum and brain.

The protein localises to the cytoplasm. Its subcellular location is the myofibril. The protein resides in the sarcomere. It localises to the m line. Its pathway is protein modification; protein ubiquitination. Probable substrate-specific adapter of a BCR (BTB-CUL3-RBX1) E3 ubiquitin-protein ligase complex mediating the ubiquitination and subsequent proteasomal degradation of target proteins. Promotes the ubiquitination of HDAC1; the function seems to depend on KCTD11:KCTD6 oligomerization. Can function as antagonist of the Hedgehog pathway by affecting the nuclear transfer of transcription factor GLI1; the function probably occurs via HDAC1 down-regulation, keeping GLI1 acetylated and inactive. Inhibits cell growth and tumorigenicity of medulloblastoma (MDB). Involved in regulating protein levels of ANK1 isoform Mu7 probably implicating CUL3-dependent proteasomal degradation. This Mus musculus (Mouse) protein is BTB/POZ domain-containing protein KCTD6 (Kctd6).